Reading from the N-terminus, the 443-residue chain is Histidinol dehydrogenase (443 aa).

Positions 133, 191, and 214 each coordinate NAD(+). Substrate is bound by residues S240, Q262, and H265. The Zn(2+) site is built by Q262 and H265. Residues E329 and H330 each act as proton acceptor in the active site. The substrate site is built by H330, D363, E417, and H422. D363 serves as a coordination point for Zn(2+). H422 contacts Zn(2+).

The protein belongs to the histidinol dehydrogenase family. Homodimer. Zn(2+) serves as cofactor.

The enzyme catalyses L-histidinol + 2 NAD(+) + H2O = L-histidine + 2 NADH + 3 H(+). It participates in amino-acid biosynthesis; L-histidine biosynthesis; L-histidine from 5-phospho-alpha-D-ribose 1-diphosphate: step 9/9. Functionally, catalyzes the sequential NAD-dependent oxidations of L-histidinol to L-histidinaldehyde and then to L-histidine. This chain is Histidinol dehydrogenase, found in Yersinia pestis.